We begin with the raw amino-acid sequence, 423 residues long: Endochitinase 1 (423 aa).

Positions Met1–Ala22 are cleaved as a signal peptide. Residues Tyr39 to Pro401 enclose the GH18 domain. Residues Asn74, Asn78, and Asn96 are each glycosylated (N-linked (GlcNAc...) asparagine). Residues Gly103 to Thr104 and Gly130 to Thr133 contribute to the chitin site. The active-site Proton donor is Glu172. Chitin contacts are provided by residues Tyr173 and Met238–Asp241. Asn248 carries N-linked (GlcNAc...) asparagine glycosylation. Trp378 contacts chitin. Residues Ala380 to Ala423 are disordered. The segment covering Asp383–Leu407 has biased composition (polar residues). Residues Ser413–Ala423 show a composition bias toward basic and acidic residues.

It belongs to the glycosyl hydrolase 18 family. Chitinase class V subfamily.

The protein resides in the secreted. It catalyses the reaction Random endo-hydrolysis of N-acetyl-beta-D-glucosaminide (1-&gt;4)-beta-linkages in chitin and chitodextrins.. Secreted chitinase involved in the degradation of chitin, a component of the cell walls of fungi and exoskeletal elements of some animals (including worms and arthropods). Participates in the infection process and directly acts in the penetration process of the host cuticle. The polypeptide is Endochitinase 1 (chit1) (Metarhizium anisopliae (Entomophthora anisopliae)).